The chain runs to 684 residues: Zinc finger BED domain-containing protein RICESLEEPER 4 (684 aa).

The segment at 54 to 113 (KRKSAIWEHFTLVDVSDGCKRASCIHCNQSLAYSSGSKNSGTSHLTRHIAEWCRVLKDRQ) adopts a BED-type zinc-finger fold. Residues Cys-77, Cys-80, His-101, and Cys-106 each coordinate Zn(2+). The interval 595–680 (ELELYLEEAL…EALLCAKDWL (86 aa)) is HATC (Hobo-Ac-Tam3) domain.

In terms of assembly, homodimer.

It localises to the nucleus. Transposase-like protein that is essential for plant growth and development. May regulate global gene expression by recruiting other cellular factors. The protein is Zinc finger BED domain-containing protein RICESLEEPER 4 of Oryza sativa subsp. japonica (Rice).